A 291-amino-acid chain; its full sequence is 4-hydroxy-tetrahydrodipicolinate synthase (291 aa).

Position 45 (Thr-45) interacts with pyruvate. The Proton donor/acceptor role is filled by Tyr-131. Lys-159 functions as the Schiff-base intermediate with substrate in the catalytic mechanism. Ile-202 contacts pyruvate.

This sequence belongs to the DapA family. Homotetramer; dimer of dimers.

It is found in the cytoplasm. The catalysed reaction is L-aspartate 4-semialdehyde + pyruvate = (2S,4S)-4-hydroxy-2,3,4,5-tetrahydrodipicolinate + H2O + H(+). The protein operates within amino-acid biosynthesis; L-lysine biosynthesis via DAP pathway; (S)-tetrahydrodipicolinate from L-aspartate: step 3/4. Functionally, catalyzes the condensation of (S)-aspartate-beta-semialdehyde [(S)-ASA] and pyruvate to 4-hydroxy-tetrahydrodipicolinate (HTPA). The chain is 4-hydroxy-tetrahydrodipicolinate synthase from Methanosarcina barkeri (strain Fusaro / DSM 804).